The following is a 215-amino-acid chain: 3-demethoxyubiquinol 3-hydroxylase (215 aa).

Glu-64, Glu-94, His-97, Glu-146, Glu-178, and His-181 together coordinate Fe cation.

It belongs to the COQ7 family. Fe cation is required as a cofactor.

The protein resides in the cell membrane. It catalyses the reaction a 5-methoxy-2-methyl-3-(all-trans-polyprenyl)benzene-1,4-diol + AH2 + O2 = a 3-demethylubiquinol + A + H2O. It participates in cofactor biosynthesis; ubiquinone biosynthesis. Functionally, catalyzes the hydroxylation of 2-nonaprenyl-3-methyl-6-methoxy-1,4-benzoquinol during ubiquinone biosynthesis. This Azotobacter vinelandii (strain DJ / ATCC BAA-1303) protein is 3-demethoxyubiquinol 3-hydroxylase.